Reading from the N-terminus, the 100-residue chain is Large ribosomal subunit protein uL23 (100 aa).

The protein belongs to the universal ribosomal protein uL23 family. In terms of assembly, part of the 50S ribosomal subunit. Contacts protein L29, and trigger factor when it is bound to the ribosome.

One of the early assembly proteins it binds 23S rRNA. One of the proteins that surrounds the polypeptide exit tunnel on the outside of the ribosome. Forms the main docking site for trigger factor binding to the ribosome. The protein is Large ribosomal subunit protein uL23 of Prochlorococcus marinus (strain MIT 9215).